The following is a 360-amino-acid chain: Protein phosphatase 1 regulatory subunit 7 (360 aa).

The interval 1-64 (MAAERGAGQQ…GEEDPEEEHE (64 aa)) is disordered. A2 carries the post-translational modification N-acetylalanine. 5 positions are modified to phosphoserine: S12, S24, S27, S44, and S47. The span at 17–34 (EVDRRVESEESGDEEGKK) shows a compositional bias: basic and acidic residues. The span at 53–63 (ERGEEDPEEEH) shows a compositional bias: acidic residues. 11 LRR repeats span residues 77 to 98 (DAED…EVLK), 99 to 120 (KVKT…EELQ), 121 to 142 (SLRE…EALT), 143 to 164 (ELEI…DKLT), 165 to 186 (RLKK…SNLH), 187 to 208 (QLQM…DTLT), 209 to 230 (NLES…DALT), 231 to 252 (NLTV…QNLV), 253 to 274 (NLRE…ENNN), 275 to 296 (KLTM…SHLT), and 297 to 318 (ELQE…DELK). The residue at position 322 (S322) is a Phosphoserine. Positions 331–360 (NPLQKDPQYRRKVMLALPSVRQIDATFVRF) constitute an LRRCT domain.

This sequence belongs to the SDS22 family. Interacts with PPP1CA, PPP1CB and PPP1CC/PPP1G isoform 1. Widely expressed.

It localises to the nucleus. Regulatory subunit of protein phosphatase 1. The chain is Protein phosphatase 1 regulatory subunit 7 (PPP1R7) from Homo sapiens (Human).